Here is a 222-residue protein sequence, read N- to C-terminus: MGSGSRERIVEVFDALDAELDRLDEVSFEVLTTPERLRSLERLECLVRRLPAVGHALINQLDAQASEEELGGTLCCALANRLRITKPDAARRIADAADLGPRRALTGEPLAPQLTATATAQRQGLIGEAHVKVIRALFRPPARRGGCVHPPGRRSRPGRQSRSISSRRAGPLRPAGHGLATPRRRPHRHRTRPQTRHHPEQPAIRRHVTAKWLPDPPSAGHL.

Residues 142–222 are disordered; the sequence is ARRGGCVHPP…LPDPPSAGHL (81 aa). Over residues 160–169 the composition is skewed to low complexity; it reads QSRSISSRRA. The segment covering 182–196 has biased composition (basic residues); sequence PRRRPHRHRTRPQTR.

The protein belongs to the Rv1128c/1148c/1588c/1702c/1945/3466 family.

This is an uncharacterized protein from Mycobacterium tuberculosis (strain ATCC 25618 / H37Rv).